Reading from the N-terminus, the 286-residue chain is 2-hydroxy-6-oxo-6-phenylhexa-2,4-dienoate hydrolase (286 aa).

Residues 36–271 form the AB hydrolase-1 domain; the sequence is VIMLHGGGPG…KCGHWAQWEH (236 aa). Substrate-binding positions include 42-43, Asn51, Asn111, Ser180, and Arg190; that span reads GG. His265 acts as the Proton acceptor in catalysis. Trp266 contacts substrate.

The protein belongs to the AB hydrolase superfamily. BphD family. As to quaternary structure, homodimer.

It carries out the reaction 2,6-dioxo-6-phenylhexa-3-enoate + H2O = 2-oxopent-4-enoate + benzoate + H(+). It functions in the pathway xenobiotic degradation; biphenyl degradation; 2-hydroxy-2,4-pentadienoate and benzoate from biphenyl: step 4/4. Functionally, catalyzes an unusual C-C bond hydrolysis of 2-hydroxy-6-oxo-6-phenylhexa-2,4-dienoic acid (HOPDA) to produce benzoic acid and 2-hydroxy-2,4-pentadienoic acid (HPD). In Metapseudomonas furukawaii (Pseudomonas furukawaii), this protein is 2-hydroxy-6-oxo-6-phenylhexa-2,4-dienoate hydrolase (bphD).